Reading from the N-terminus, the 162-residue chain is Flagellar assembly factor FliW (162 aa).

It belongs to the FliW family. As to quaternary structure, interacts with translational regulator CsrA and flagellin(s).

Its subcellular location is the cytoplasm. Functionally, acts as an anti-CsrA protein, binds CsrA and prevents it from repressing translation of its target genes, one of which is flagellin. Binds to flagellin and participates in the assembly of the flagellum. In Alkaliphilus metalliredigens (strain QYMF), this protein is Flagellar assembly factor FliW.